The sequence spans 159 residues: Probable cyclic pyranopterin monophosphate synthase accessory protein (159 aa).

Asp128 is a catalytic residue.

The protein belongs to the MoaC family.

Its pathway is cofactor biosynthesis; molybdopterin biosynthesis. In terms of biological role, together with MoaA, is involved in the conversion of 5'-GTP to cyclic pyranopterin monophosphate (cPMP or molybdopterin precursor Z). This is Probable cyclic pyranopterin monophosphate synthase accessory protein from Methanothermobacter thermautotrophicus (strain ATCC 29096 / DSM 1053 / JCM 10044 / NBRC 100330 / Delta H) (Methanobacterium thermoautotrophicum).